The chain runs to 425 residues: Cyclin-K (425 aa).

The segment at 262–425 (GKQPIPQQPP…RRYLDDDRNL (164 aa)) is disordered. Low complexity predominate over residues 366 to 377 (AEPAAASELDPA). Residues 379 to 399 (GPAPPLPHGAPPPLPHRPPPT) are compositionally biased toward pro residues.

Belongs to the cyclin family.

It localises to the nucleus. Its function is as follows. Regulatory subunit of cyclin-dependent kinases that mediates activation of target kinases. Plays a role in transcriptional regulation via its role in regulating the phosphorylation of the C-terminal domain (CTD) of the large subunit of RNA polymerase II (POLR2A). The sequence is that of Cyclin-K (ccnk) from Danio rerio (Zebrafish).